We begin with the raw amino-acid sequence, 262 residues long: Shikimate dehydrogenase (NADP(+)) (262 aa).

Residues 15–17 and T62 contribute to the shikimate site; that span reads SRS. K66 acts as the Proton acceptor in catalysis. E78 is an NADP(+) binding site. Shikimate is bound by residues N87 and D102. NADP(+) contacts are provided by residues 126-130, 150-155, and M214; these read GAGGA and NRTLAR. Y216 is a binding site for shikimate. NADP(+) is bound at residue G236.

Belongs to the shikimate dehydrogenase family. Homodimer.

It catalyses the reaction shikimate + NADP(+) = 3-dehydroshikimate + NADPH + H(+). The protein operates within metabolic intermediate biosynthesis; chorismate biosynthesis; chorismate from D-erythrose 4-phosphate and phosphoenolpyruvate: step 4/7. Functionally, involved in the biosynthesis of the chorismate, which leads to the biosynthesis of aromatic amino acids. Catalyzes the reversible NADPH linked reduction of 3-dehydroshikimate (DHSA) to yield shikimate (SA). In Acinetobacter baumannii (strain AB0057), this protein is Shikimate dehydrogenase (NADP(+)).